A 250-amino-acid polypeptide reads, in one-letter code: Proteasome subunit alpha type-7-B (250 aa).

K62 is covalently cross-linked (Glycyl lysine isopeptide (Lys-Gly) (interchain with G-Cter in ubiquitin)).

Belongs to the peptidase T1A family. In terms of assembly, component of the 20S core complex of the 26S proteasome. The 26S proteasome is composed of a core protease (CP), known as the 20S proteasome, capped at one or both ends by the 19S regulatory particle (RP/PA700). The 20S proteasome core is composed of 28 subunits that are arranged in four stacked rings, resulting in a barrel-shaped structure. The two end rings are each formed by seven alpha subunits, and the two central rings are each formed by seven beta subunits. The catalytic chamber with the active sites is on the inside of the barrel.

Its subcellular location is the cytoplasm. It is found in the nucleus. Functionally, the proteasome is a multicatalytic proteinase complex which is characterized by its ability to cleave peptides with Arg, Phe, Tyr, Leu, and Glu adjacent to the leaving group at neutral or slightly basic pH. The proteasome has an ATP-dependent proteolytic activity. The polypeptide is Proteasome subunit alpha type-7-B (PAD2) (Arabidopsis thaliana (Mouse-ear cress)).